An 826-amino-acid polypeptide reads, in one-letter code: Eukaryotic translation initiation factor 3 subunit C (826 aa).

2 disordered regions span residues 1-71 (MSRF…GKGA) and 205-227 (SGGD…PRAK). A compositionally biased stretch (acidic residues) spans 10 to 20 (DSDDSSSDEDL). The span at 21 to 30 (YGSGSESGSD) shows a compositional bias: low complexity. Residues 32-65 (SQDEQDGGDDNDDDMSDDSMFADDSDDDSDDDED) show a composition bias toward acidic residues. Positions 218 to 227 (KEDKPKPRAK) are enriched in basic and acidic residues. In terms of domain architecture, PCI spans 605-779 (FHTHINLELL…NSVVFTQAVQ (175 aa)).

This sequence belongs to the eIF-3 subunit C family. Component of the eukaryotic translation initiation factor 3 (eIF-3) complex.

It is found in the cytoplasm. Component of the eukaryotic translation initiation factor 3 (eIF-3) complex, which is involved in protein synthesis of a specialized repertoire of mRNAs and, together with other initiation factors, stimulates binding of mRNA and methionyl-tRNAi to the 40S ribosome. The eIF-3 complex specifically targets and initiates translation of a subset of mRNAs involved in cell proliferation. The protein is Eukaryotic translation initiation factor 3 subunit C of Yarrowia lipolytica (strain CLIB 122 / E 150) (Yeast).